A 517-amino-acid polypeptide reads, in one-letter code: 2-isopropylmalate synthase (517 aa).

In terms of domain architecture, Pyruvate carboxyltransferase spans 5–267 (VIIFDTTLRD…HTNVRCQEIY (263 aa)). The Mn(2+) site is built by Asp14, His202, His204, and Asn238. A regulatory domain region spans residues 392 to 517 (RLKCFHVDSS…QRKYIKKNNN (126 aa)).

Belongs to the alpha-IPM synthase/homocitrate synthase family. LeuA type 1 subfamily. In terms of assembly, homodimer. Mn(2+) is required as a cofactor.

The protein localises to the cytoplasm. The enzyme catalyses 3-methyl-2-oxobutanoate + acetyl-CoA + H2O = (2S)-2-isopropylmalate + CoA + H(+). The protein operates within amino-acid biosynthesis; L-leucine biosynthesis; L-leucine from 3-methyl-2-oxobutanoate: step 1/4. In terms of biological role, catalyzes the condensation of the acetyl group of acetyl-CoA with 3-methyl-2-oxobutanoate (2-ketoisovalerate) to form 3-carboxy-3-hydroxy-4-methylpentanoate (2-isopropylmalate). This chain is 2-isopropylmalate synthase, found in Blochmanniella pennsylvanica (strain BPEN).